Reading from the N-terminus, the 254-residue chain is 5-oxoprolinase subunit A (254 aa).

It belongs to the LamB/PxpA family. Forms a complex composed of PxpA, PxpB and PxpC.

It carries out the reaction 5-oxo-L-proline + ATP + 2 H2O = L-glutamate + ADP + phosphate + H(+). Its function is as follows. Catalyzes the cleavage of 5-oxoproline to form L-glutamate coupled to the hydrolysis of ATP to ADP and inorganic phosphate. This chain is 5-oxoprolinase subunit A, found in Heliobacterium modesticaldum (strain ATCC 51547 / Ice1).